Here is a 415-residue protein sequence, read N- to C-terminus: Dynein assembly factor with WD repeat domains 1 (415 aa).

WD repeat units follow at residues 90-129 (AHIL…ELHT), 132-174 (GHRN…HTFR), 175-214 (GHTA…EVVT), 217-256 (GHLA…KVHT), 259-298 (GHCA…CVAT), 301-340 (GHDD…CITK), 343-384 (GHEG…QVLE), and 386-415 (HTDE…RIWR).

Belongs to the WD repeat WDR69 family. In terms of assembly, interacts with IFT46.

It localises to the cytoplasm. It is found in the cytoskeleton. The protein localises to the flagellum basal body. The protein resides in the flagellum axoneme. Required for axonemal dynein assembly and ciliary motility in ciliated organs, including Kupffer's vesicle, during embryogenesis. Facilitates the onset of robust cilia motility during development. The polypeptide is Dynein assembly factor with WD repeat domains 1 (Daw1) (Rattus norvegicus (Rat)).